We begin with the raw amino-acid sequence, 169 residues long: ATP synthase subunit b (169 aa).

A helical membrane pass occupies residues Thr14–Phe34.

It belongs to the ATPase B chain family. In terms of assembly, F-type ATPases have 2 components, F(1) - the catalytic core - and F(0) - the membrane proton channel. F(1) has five subunits: alpha(3), beta(3), gamma(1), delta(1), epsilon(1). F(0) has four main subunits: a(1), b(2) and c(10-14). The alpha and beta chains form an alternating ring which encloses part of the gamma chain. F(1) is attached to F(0) by a central stalk formed by the gamma and epsilon chains, while a peripheral stalk is formed by the delta and b chains.

Its subcellular location is the cell membrane. In terms of biological role, f(1)F(0) ATP synthase produces ATP from ADP in the presence of a proton or sodium gradient. F-type ATPases consist of two structural domains, F(1) containing the extramembraneous catalytic core and F(0) containing the membrane proton channel, linked together by a central stalk and a peripheral stalk. During catalysis, ATP synthesis in the catalytic domain of F(1) is coupled via a rotary mechanism of the central stalk subunits to proton translocation. Component of the F(0) channel, it forms part of the peripheral stalk, linking F(1) to F(0). In Heliobacterium modesticaldum (strain ATCC 51547 / Ice1), this protein is ATP synthase subunit b.